The following is a 164-amino-acid chain: MYFPMIELTLVLLASSNLAMSVRKEIRAPQTLSRGWGDDISWVQTYEEGLYNAKKRNKPLMVIHHLEDCQYCQALKKVFAESDEAQTLAQEQFIMLNLMHETTDKNLSPDGQYVPRIMFIDPTLTVRADITGRYSNRRYTYEPQDLPLLIENMNKAIHLLQTEL.

An N-terminal signal peptide occupies residues 1-19 (MYFPMIELTLVLLASSNLA). A Prevents secretion from ER motif is present at residues 161–164 (QTEL).

The protein belongs to the AGR family.

It is found in the endoplasmic reticulum. The protein localises to the cytoplasm. In terms of biological role, required for calcium-mediated regulation of ciliary beat frequency in the airway. This is Anterior gradient protein 3 from Xenopus tropicalis (Western clawed frog).